The following is a 591-amino-acid chain: Probable cyclin-dependent kinase 9 (591 aa).

Residues 1–385 (MKRSSSVSVE…FEQTANGKRQ (385 aa)) form an interaction with pch1 region. The Protein kinase domain occupies 36-339 (YHLMEKLGEG…ASMALEHEYF (304 aa)). ATP-binding positions include 42–50 (LGEGTFGEV) and K65. D166 acts as the Proton acceptor in catalysis. Position 211 is a phosphotyrosine (Y211). The residue at position 212 (T212) is a Phosphothreonine. Disordered regions lie at residues 341 to 534 (TPPY…KTQH) and 549 to 591 (ARQS…DTPK). Positions 358 to 372 (HEYDKRRKREQRDAN) are enriched in basic and acidic residues. Polar residues-rich tracts occupy residues 404–415 (NYNSQPQYQRGS) and 428–465 (NVNY…TSNH). Residues 442-523 (LTSDLPQKNS…NSKVQTTSRA (82 aa)) form a binds to pct1 region. A compositionally biased stretch (basic and acidic residues) spans 466 to 482 (SHADGQRYYRPEQDRSQ). Positions 491–502 (GRQGRQSSQSQQ) are enriched in low complexity. The span at 503-534 (PAWNVSSRYQNNSKVQTTSRASENADTNKTQH) shows a compositional bias: polar residues. The residue at position 565 (T565) is a Phosphothreonine. A Phosphoserine modification is found at S577.

This sequence belongs to the protein kinase superfamily. CMGC Ser/Thr protein kinase family. CDC2/CDKX subfamily. Interacts with pch1 cyclin via its N-terminal domain. Via its C-terminal domain, interacts with RNA triphosphatase pct1 which is involved in mRNA capping. Also interacts with pcm1.

It is found in the nucleus. It catalyses the reaction L-seryl-[protein] + ATP = O-phospho-L-seryl-[protein] + ADP + H(+). The catalysed reaction is L-threonyl-[protein] + ATP = O-phospho-L-threonyl-[protein] + ADP + H(+). It carries out the reaction [DNA-directed RNA polymerase] + ATP = phospho-[DNA-directed RNA polymerase] + ADP + H(+). May be activated by autophosphorylation or phosphorylation by a separate activating kinase. Its function is as follows. Component of the positive transcription elongation factor b (P-TEFb) which consists of cdk9 and pch1, and which phosphorylates the C-terminal domain (CTD) of RNA polymerase II and spt5. This Schizosaccharomyces pombe (strain 972 / ATCC 24843) (Fission yeast) protein is Probable cyclin-dependent kinase 9 (cdk9).